Reading from the N-terminus, the 147-residue chain is Putative pre-16S rRNA nuclease (147 aa).

This sequence belongs to the YqgF nuclease family.

The protein resides in the cytoplasm. Functionally, could be a nuclease involved in processing of the 5'-end of pre-16S rRNA. In Limosilactobacillus reuteri (strain DSM 20016) (Lactobacillus reuteri), this protein is Putative pre-16S rRNA nuclease.